A 126-amino-acid chain; its full sequence is Profilin-3 (126 aa).

It belongs to the profilin family. Occurs in many kinds of cells as a complex with monomeric actin in a 1:1 ratio.

The protein resides in the cytoplasm. Its subcellular location is the cytoskeleton. Functionally, binds to actin and affects the structure of the cytoskeleton. At high concentrations, profilin prevents the polymerization of actin, whereas it enhances it at low concentrations. By binding to PIP2, it inhibits the formation of IP3 and DG. The protein is Profilin-3 (proC) of Dictyostelium discoideum (Social amoeba).